We begin with the raw amino-acid sequence, 351 residues long: Protein-glutamate methylesterase/protein-glutamine glutaminase (351 aa).

The Response regulatory domain occupies Arg-6 to Lys-123. At Asp-57 the chain carries 4-aspartylphosphate. One can recognise a CheB-type methylesterase domain in the interval Tyr-154 to Arg-346. Residues Ser-166, His-192, and Asp-288 contribute to the active site.

Belongs to the CheB family. Post-translationally, phosphorylated by CheA. Phosphorylation of the N-terminal regulatory domain activates the methylesterase activity.

It is found in the cytoplasm. The catalysed reaction is [protein]-L-glutamate 5-O-methyl ester + H2O = L-glutamyl-[protein] + methanol + H(+). It carries out the reaction L-glutaminyl-[protein] + H2O = L-glutamyl-[protein] + NH4(+). In terms of biological role, involved in chemotaxis. Part of a chemotaxis signal transduction system that modulates chemotaxis in response to various stimuli. Catalyzes the demethylation of specific methylglutamate residues introduced into the chemoreceptors (methyl-accepting chemotaxis proteins or MCP) by CheR. Also mediates the irreversible deamidation of specific glutamine residues to glutamic acid. The polypeptide is Protein-glutamate methylesterase/protein-glutamine glutaminase (Agrobacterium fabrum (strain C58 / ATCC 33970) (Agrobacterium tumefaciens (strain C58))).